A 102-amino-acid chain; its full sequence is Pole-localizer protein TmaR (102 aa).

Positions 7 to 34 (IINQARRKNKLKRELQDNQKKIRDNQKR) form a coiled coil.

It belongs to the pole-localizer TmaR family.

Its subcellular location is the cytoplasm. Its function is as follows. Pole-localizer protein involved in the regulation of several cellular processes. This Aliivibrio fischeri (strain ATCC 700601 / ES114) (Vibrio fischeri) protein is Pole-localizer protein TmaR.